A 220-amino-acid polypeptide reads, in one-letter code: uncharacterized protein (220 aa).

7 helical membrane-spanning segments follow: residues 6–26, 33–53, 59–79, 103–123, 126–146, 157–177, and 179–199; these read FSIL…LIVW, IVRL…LRGI, ALIA…PWLL, LLIT…VVNL, GVTI…LFVM, AGFL…TAGV, and LIVE…IGVL.

The protein localises to the cell membrane. This is an uncharacterized protein from Mycobacterium tuberculosis (strain ATCC 25618 / H37Rv).